A 410-amino-acid chain; its full sequence is 2-epi-5-epi-valiolone synthase (410 aa).

NAD(+)-binding positions include aspartate 66, 97–100, 130–134, 154–155, lysine 167, lysine 176, and 194–197; these read ETLK, GVLMD, TT, and FLAT. Lysine 167 is a catalytic residue. Residues glutamate 209, histidine 280, and histidine 296 each contribute to the a divalent metal cation site.

It belongs to the sugar phosphate cyclases superfamily. EEVS family. The cofactor is NAD(+). Requires Co(2+) as cofactor.

The enzyme catalyses D-sedoheptulose 7-phosphate = 2-epi-5-epi-valiolone + phosphate. In terms of biological role, catalyzes the cyclization of D-sedoheptulose 7-phosphate to 2-epi-5-epi-valiolone. Involved in salbostatin biosynthesis. In Streptomyces albus (strain ATCC 21838 / DSM 41398 / FERM P-419 / JCM 4703 / NBRC 107858), this protein is 2-epi-5-epi-valiolone synthase.